Here is a 331-residue protein sequence, read N- to C-terminus: MSHPTTFNSHLWQQHRLAQQPIEISILLTQMGFAAKVLAREISRAALMGNLGLMGETNATGDAQKKLDVFSNQIVIDAFSNIGLVAVIASEELDQVKLIECGQQAQYILCTDPLDGSSNTDTGSAVGTIFGIYRRQTSGYCSTEADVLQPGTELVTAGYVLYGTSTMLVYTTGGRVDGFTLDPSLGEFLLSHENIRCPETGKTYSANLSYYQEWHPHIQNFADYLSDRKSHTAHTLRYSGALVADVHRCLLEGGLYFYPPTADQPEGKLRLLYECAPLAFLVEQAGGKATSGLARIMDLEVTSIHQRSPLVIGSQVAVNLYQTFLEQGKAA.

Mg(2+)-binding residues include Glu91, Asp112, Leu114, and Asp115. Substrate contacts are provided by residues 115 to 118 (DGSS), Asn207, Tyr238, and Lys268. Glu274 is a binding site for Mg(2+).

It belongs to the FBPase class 1 family. In terms of assembly, homotetramer. Requires Mg(2+) as cofactor.

The protein localises to the cytoplasm. It catalyses the reaction beta-D-fructose 1,6-bisphosphate + H2O = beta-D-fructose 6-phosphate + phosphate. The protein operates within carbohydrate biosynthesis; Calvin cycle. The polypeptide is Fructose-1,6-bisphosphatase class 1 2 (Acaryochloris marina (strain MBIC 11017)).